Here is a 393-residue protein sequence, read N- to C-terminus: S-adenosylmethionine synthase 1 (393 aa).

A Mg(2+)-binding site is contributed by Glu9. His15 provides a ligand contact to ATP. Glu43 contributes to the K(+) binding site. Residues Glu56 and Gln99 each coordinate L-methionine. ATP is bound by residues Asp167–Lys169, Ser235–Phe238, Asp246, Arg252–Lys253, Ala269, Lys273, and Lys277. Residue Asp246 coordinates L-methionine. Residue Lys277 coordinates L-methionine.

The protein belongs to the AdoMet synthase family. In terms of assembly, homotetramer. Mn(2+) serves as cofactor. Mg(2+) is required as a cofactor. The cofactor is Co(2+). Requires K(+) as cofactor.

It is found in the cytoplasm. The enzyme catalyses L-methionine + ATP + H2O = S-adenosyl-L-methionine + phosphate + diphosphate. The protein operates within amino-acid biosynthesis; S-adenosyl-L-methionine biosynthesis; S-adenosyl-L-methionine from L-methionine: step 1/1. Catalyzes the formation of S-adenosylmethionine from methionine and ATP. The reaction comprises two steps that are both catalyzed by the same enzyme: formation of S-adenosylmethionine (AdoMet) and triphosphate, and subsequent hydrolysis of the triphosphate. This is S-adenosylmethionine synthase 1 (METK1) from Picea sitchensis (Sitka spruce).